The following is a 175-amino-acid chain: NADH-ubiquinone oxidoreductase chain 6 (175 aa).

A run of 5 helical transmembrane segments spans residues 1 to 21 (MMLY…VGFS), 25 to 45 (SPIY…GIVL), 47 to 67 (FGGS…MMVV), 88 to 108 (AVLG…YYVL), and 149 to 169 (YGTW…VVIM).

It belongs to the complex I subunit 6 family. In terms of assembly, core subunit of respiratory chain NADH dehydrogenase (Complex I) which is composed of 45 different subunits.

The protein resides in the mitochondrion inner membrane. The enzyme catalyses a ubiquinone + NADH + 5 H(+)(in) = a ubiquinol + NAD(+) + 4 H(+)(out). In terms of biological role, core subunit of the mitochondrial membrane respiratory chain NADH dehydrogenase (Complex I) which catalyzes electron transfer from NADH through the respiratory chain, using ubiquinone as an electron acceptor. Essential for the catalytic activity and assembly of complex I. In Bos mutus grunniens (Wild yak), this protein is NADH-ubiquinone oxidoreductase chain 6 (MT-ND6).